The sequence spans 99 residues: NADH-ubiquinone oxidoreductase chain 4L (99 aa).

The next 3 membrane-spanning stretches (helical) occupy residues 5–25 (IITA…GFII), 30–50 (ILLL…IIIC), and 65–85 (LYIL…LVLF).

Belongs to the complex I subunit 4L family.

The protein localises to the mitochondrion membrane. It catalyses the reaction a ubiquinone + NADH + 5 H(+)(in) = a ubiquinol + NAD(+) + 4 H(+)(out). Its function is as follows. Core subunit of the mitochondrial membrane respiratory chain NADH dehydrogenase (Complex I) that is believed to belong to the minimal assembly required for catalysis. Complex I functions in the transfer of electrons from NADH to the respiratory chain. The immediate electron acceptor for the enzyme is believed to be ubiquinone. In Allomyces macrogynus, this protein is NADH-ubiquinone oxidoreductase chain 4L (ND4L).